Here is a 1166-residue protein sequence, read N- to C-terminus: Reverse gyrase (1166 aa).

The RG N-terminal-type zinc finger occupies 1–40 (MINVMYKNSCPNCGGDISADRLLNGLPCETCLPYINGIDG). The Zn(2+) site is built by C10, C13, C28, and C31. Residues Q92 and 109 to 116 (APTGLGKT) each bind ATP. A Helicase ATP-binding domain is found at 96–285 (LRRLVSNQSF…ALRLLTGFEP (190 aa)). The DEAD box signature appears at 190-193 (DDAD). The interval 576–1166 (FNISTGLLIV…VNPLKSEQNV (591 aa)) is topoisomerase I. The Toprim domain maps to 580–743 (TGLLIVESPT…NIYRITYHEI (164 aa)). E586 contributes to the Mg(2+) binding site. The segment at 662–689 (IKKCLDCNKTFSIASDKCPYCGSTNVQT) adopts an RG C-terminal-type zinc-finger fold. The Zn(2+) site is built by C665, C668, C679, and C682. D712 lines the Mg(2+) pocket. A Topo IA-type catalytic domain is found at 759-1157 (NTNLVMSQIV…EIFSEISTLV (399 aa)). The active-site O-(5'-phospho-DNA)-tyrosine intermediate is Y903.

It in the N-terminal section; belongs to the DEAD box helicase family. DDVD subfamily. In the C-terminal section; belongs to the type IA topoisomerase family. In terms of assembly, monomer. Zn(2+) serves as cofactor. The cofactor is Mg(2+).

Its subcellular location is the cytoplasm. The catalysed reaction is ATP + H2O = ADP + phosphate + H(+). Its activity is regulated as follows. Inhibited by UV light-induced lesions; substrate is completely cleaved but a nicked form accumulates, suggesting the reaction is blocked between the cleavage and ligation steps. Inhibited by actinomycin D; substrate DNA remains negatively supercoiled in this case. Activity is stimulated by SSB from S.solfataricus strain P2. Positive supercoiling is inhibited by Sul7d (also called Sso7d) from S.solfataricus strain MT4; SSB from S.solfataricus strain P2 relieves this inhibition. Its function is as follows. Modifies the topological state of DNA by introducing positive supercoils in an ATP-dependent process. Increases the linking number in steps of +1. In vitro requires high concentrations to supercoil negatively supercoiled DNA, relaxes plasmid DNA first; DNA single-strand binding protein (SSB) from S.solfataricus strain P2 stimulates positive supercoiling. SSB stimulates DNA-binding by reverse gyrase, and thus all subsequent steps. Binds to single-stranded DNA, transiently cleaves and then rejoins the ends, introducing a positive supercoil in the process. The scissile phosphodiester is attacked by the catalytic tyrosine of the enzyme, resulting in the formation of a DNA-(5'-phosphotyrosyl)-enzyme intermediate. May be involved in DNA damage response. Probably involved in rewinding DNA strands in regions of the chromosome that have opened up to allow replication, transcription, DNA repair and/or for DNA protection. In Saccharolobus shibatae (strain ATCC 51178 / DSM 5389 / JCM 8931 / NBRC 15437 / B12) (Sulfolobus shibatae), this protein is Reverse gyrase.